A 178-amino-acid chain; its full sequence is Probable chorismate pyruvate-lyase (178 aa).

Residues arginine 73, leucine 111, and glutamate 163 each coordinate substrate.

Belongs to the UbiC family.

Its subcellular location is the cytoplasm. It catalyses the reaction chorismate = 4-hydroxybenzoate + pyruvate. The protein operates within cofactor biosynthesis; ubiquinone biosynthesis. Removes the pyruvyl group from chorismate, with concomitant aromatization of the ring, to provide 4-hydroxybenzoate (4HB) for the ubiquinone pathway. In Pseudomonas aeruginosa (strain UCBPP-PA14), this protein is Probable chorismate pyruvate-lyase.